A 333-amino-acid polypeptide reads, in one-letter code: FAD-dependent monooxygenase pytG (333 aa).

A helical transmembrane segment spans residues 6–26 (LPNVSVAIIGAGIGGLTLGAF). FAD-binding residues include Glu38 and Arg109. N-linked (GlcNAc...) asparagine glycosylation is present at Asn303.

The protein belongs to the paxM FAD-dependent monooxygenase family. The cofactor is FAD.

It localises to the membrane. The protein operates within secondary metabolite biosynthesis. In terms of biological role, FAD-dependent monooxygenase; part of the gene cluster that mediates the biosynthesis of pyranterreones, a family of antioxidative compounds. The first step of pyranonigrins biosynthesis is performed by the hybrid PKS-NRPS synthetase pytA that condenses 4 malonyl-CoA units ato the acetyl starter unit by the modular PKS of pytA. The acyl chain is then connected to an L-serine through the amide bond by the modular NRPS of pytA. A tetramic acid is formed and released from the PKS-NRPS pytA to give pyranterreone 5 with the help of the thioesterase pytI. Pyranterreone 5 could be methylated by pytC to afford pyranterreone 6. Both pyranterreones 5 and 6 are subsequently oxidized by the FAD-linked oxidoreductase pytB and the cytochrome P450 monooxygenase pytD to form the fused gamma-pyrone core, resulting in pyranterreones 7 and 11, respectively. The hydroxy group at C-8 of pyranterreones 7 and 11 are dehydrated by the aspartyl protease pytH to form a delta-7 double bond to give pyranterreones 3 and 1, 2 accordingly. The exo-methylene of pyranterreone 3 could be reduced into a pendant methyl by reductase pytE to provide pyranterreone 4, also known as cordylactam. Pyranterreone 4 can be reconverted to pyranterreone 3 through pytB-catalyzed dehydrogenation or further oxidized to pyranterreones 9 and 10. This chain is FAD-dependent monooxygenase pytG, found in Aspergillus terreus (strain NIH 2624 / FGSC A1156).